The sequence spans 223 residues: Thiamine-phosphate synthase (223 aa).

Residues Q42–K46 and N83 each bind 4-amino-2-methyl-5-(diphosphooxymethyl)pyrimidine. D84 and D103 together coordinate Mg(2+). S122 contributes to the 4-amino-2-methyl-5-(diphosphooxymethyl)pyrimidine binding site. T148–T150 contacts 2-[(2R,5Z)-2-carboxy-4-methylthiazol-5(2H)-ylidene]ethyl phosphate. Residue K151 coordinates 4-amino-2-methyl-5-(diphosphooxymethyl)pyrimidine. G179 provides a ligand contact to 2-[(2R,5Z)-2-carboxy-4-methylthiazol-5(2H)-ylidene]ethyl phosphate.

The protein belongs to the thiamine-phosphate synthase family. Mg(2+) serves as cofactor.

It catalyses the reaction 2-[(2R,5Z)-2-carboxy-4-methylthiazol-5(2H)-ylidene]ethyl phosphate + 4-amino-2-methyl-5-(diphosphooxymethyl)pyrimidine + 2 H(+) = thiamine phosphate + CO2 + diphosphate. The catalysed reaction is 2-(2-carboxy-4-methylthiazol-5-yl)ethyl phosphate + 4-amino-2-methyl-5-(diphosphooxymethyl)pyrimidine + 2 H(+) = thiamine phosphate + CO2 + diphosphate. The enzyme catalyses 4-methyl-5-(2-phosphooxyethyl)-thiazole + 4-amino-2-methyl-5-(diphosphooxymethyl)pyrimidine + H(+) = thiamine phosphate + diphosphate. The protein operates within cofactor biosynthesis; thiamine diphosphate biosynthesis; thiamine phosphate from 4-amino-2-methyl-5-diphosphomethylpyrimidine and 4-methyl-5-(2-phosphoethyl)-thiazole: step 1/1. Condenses 4-methyl-5-(beta-hydroxyethyl)thiazole monophosphate (THZ-P) and 2-methyl-4-amino-5-hydroxymethyl pyrimidine pyrophosphate (HMP-PP) to form thiamine monophosphate (TMP). This Mycobacterium avium (strain 104) protein is Thiamine-phosphate synthase.